A 467-amino-acid chain; its full sequence is Glutamyl-tRNA reductase (467 aa).

Substrate contacts are provided by residues 49–52 (TCNR), S109, 114–116 (EQQ), and Q120. The Nucleophile role is filled by C50. 189–194 (GAGAMG) lines the NADP(+) pocket. A disordered region spans residues 446 to 467 (GFSDTTRYGTSPAQSSSKYHAE). Positions 447–467 (FSDTTRYGTSPAQSSSKYHAE) are enriched in polar residues.

Belongs to the glutamyl-tRNA reductase family. As to quaternary structure, homodimer.

The enzyme catalyses (S)-4-amino-5-oxopentanoate + tRNA(Glu) + NADP(+) = L-glutamyl-tRNA(Glu) + NADPH + H(+). Its pathway is porphyrin-containing compound metabolism; protoporphyrin-IX biosynthesis; 5-aminolevulinate from L-glutamyl-tRNA(Glu): step 1/2. In terms of biological role, catalyzes the NADPH-dependent reduction of glutamyl-tRNA(Glu) to glutamate 1-semialdehyde (GSA). This is Glutamyl-tRNA reductase from Mycobacterium leprae (strain TN).